Here is a 199-residue protein sequence, read N- to C-terminus: NAD(P)H dehydrogenase (quinone) (199 aa).

The Flavodoxin-like domain maps to 4–190; the sequence is VLVLYYSSYG…EGARHQGELV (187 aa). FMN is bound by residues 10 to 15 and 78 to 80; these read SSYGHI and TRY. Position 12 (Tyr12) interacts with NAD(+). Position 98 (Trp98) interacts with substrate. FMN contacts are provided by residues 113–119 and His134; that span reads STATQHG.

Belongs to the WrbA family. FMN is required as a cofactor.

The enzyme catalyses a quinone + NADH + H(+) = a quinol + NAD(+). It catalyses the reaction a quinone + NADPH + H(+) = a quinol + NADP(+). The sequence is that of NAD(P)H dehydrogenase (quinone) from Paraburkholderia phymatum (strain DSM 17167 / CIP 108236 / LMG 21445 / STM815) (Burkholderia phymatum).